A 189-amino-acid polypeptide reads, in one-letter code: UPF0301 protein A1E_00140 (189 aa).

Belongs to the UPF0301 (AlgH) family.

The polypeptide is UPF0301 protein A1E_00140 (Rickettsia canadensis (strain McKiel)).